The primary structure comprises 158 residues: Ecotin (158 aa).

A signal peptide spans 1 to 21 (MRLLPLASVTLLSVLCAQAFA). Cys-67 and Cys-104 are joined by a disulfide.

The protein belongs to the protease inhibitor I11 (ecotin) family. As to quaternary structure, homodimer.

The protein localises to the periplasm. General inhibitor of family S1 serine proteases. The polypeptide is Ecotin (Pseudomonas fluorescens (strain ATCC BAA-477 / NRRL B-23932 / Pf-5)).